The following is a 358-amino-acid chain: Trace amine-associated receptor 7h (358 aa).

The Extracellular segment spans residues 1–47 (MATDDESFPWDQDSILSRDLLSALSPQLCYENLNRSCVRSPYSPGPR). N-linked (GlcNAc...) asparagine glycosylation occurs at Asn34. 2 cysteine pairs are disulfide-bonded: Cys37-Cys201 and Cys120-Cys205. The helical transmembrane segment at 48–68 (LILYAVFGFGAVLAVCGNLLV) threads the bilayer. The Cytoplasmic segment spans residues 69-83 (MTSILHFRQLHSPAN). The chain crosses the membrane as a helical span at residues 84–104 (FLVASLACADLLVGLTVMPFS). Residues 105–125 (MVRSVEGCWYFGDSYCKLHTS) are Extracellular-facing. Residues 126 to 143 (FDMSFCCSSLLHLCFISV) form a helical membrane-spanning segment. Residues 144 to 166 (DRYIAVSDPLIYPIRFTASVSGK) lie on the Cytoplasmic side of the membrane. Residues 167–187 (CITFSWFLSIIYGFSLIYTGA) traverse the membrane as a helical segment. At 188–217 (SEAGLKDLVSALSCVGGCQIPMNQSCVLIN) the chain is on the extracellular side. Asn210 carries an N-linked (GlcNAc...) asparagine glycan. Residues 218–238 (FLLFLVPTLVMMTVYSKIFLI) form a helical membrane-spanning segment. Residues 239 to 274 (AKQQAQNMEKMSKQTTRASDSYKDRVAKRERKAAKT) lie on the Cytoplasmic side of the membrane. The helical transmembrane segment at 275–295 (LGIAVAAFLLSWLPYLIDSII) threads the bilayer. Topologically, residues 296 to 309 (DAFLGFITPSYVYE) are extracellular. The chain crosses the membrane as a helical span at residues 310–333 (ILVWIVYYNSAMNPLIYAFFYPWF). The Cytoplasmic portion of the chain corresponds to 334-358 (RNAIKLIVTGKILKQNSSTTNLFSE).

Belongs to the G-protein coupled receptor 1 family.

It localises to the cell membrane. Its function is as follows. Olfactory receptor specific for N,N-dimethylalkylamines trace amines. Trace amine compounds are enriched in animal body fluids and act on trace amine-associated receptors (TAARs) to elicit both intraspecific and interspecific innate behaviors. Ligand-binding causes a conformation change that triggers signaling via G(s)-class of G alpha proteins (GNAL or GNAS). The chain is Trace amine-associated receptor 7h from Rattus norvegicus (Rat).